We begin with the raw amino-acid sequence, 154 residues long: Large ribosomal subunit protein uL13 (154 aa).

This sequence belongs to the universal ribosomal protein uL13 family. As to quaternary structure, part of the 50S ribosomal subunit.

Functionally, this protein is one of the early assembly proteins of the 50S ribosomal subunit, although it is not seen to bind rRNA by itself. It is important during the early stages of 50S assembly. This Bradyrhizobium diazoefficiens (strain JCM 10833 / BCRC 13528 / IAM 13628 / NBRC 14792 / USDA 110) protein is Large ribosomal subunit protein uL13.